The chain runs to 250 residues: Solute carrier family 66 member 2 (250 aa).

Residues Arg-14 to Gln-80 form the PQ-loop 1 domain. 6 helical membrane passes run Met-15–Pro-35, Phe-49–Phe-69, His-72–Leu-92, Phe-118–Val-138, Leu-151–Tyr-173, and Phe-212–Leu-232. The region spanning Ser-149 to Cys-215 is the PQ-loop 2 domain.

Its subcellular location is the membrane. This chain is Solute carrier family 66 member 2 (slc66a2), found in Xenopus laevis (African clawed frog).